Consider the following 223-residue polypeptide: Ribonuclease T (223 aa).

Residues 20 to 194 form the Exonuclease domain; the sequence is VVIDVETAGF…YDTERTAELF (175 aa). 4 residues coordinate Mg(2+): aspartate 23, glutamate 25, histidine 181, and aspartate 186. Residue histidine 181 is the Proton donor/acceptor of the active site.

It belongs to the RNase T family. In terms of assembly, homodimer. Mg(2+) serves as cofactor.

Trims short 3' overhangs of a variety of RNA species, leaving a one or two nucleotide 3' overhang. Responsible for the end-turnover of tRNA: specifically removes the terminal AMP residue from uncharged tRNA (tRNA-C-C-A). Also appears to be involved in tRNA biosynthesis. This Shewanella baltica (strain OS185) protein is Ribonuclease T.